The primary structure comprises 571 residues: MDSRTVGILGGGQLGRMIVEAANRLNIKTVILDAENSPAKQISNSNDHVNGSFSNPLDIEKLAEKCDVLTIEIEHVDVPTLKNLQVKHPKLKIYPSPETIRLIQDKYIQKEHLIKNGIAVTQSVPVEQASETSLLNVGRDLGFPFVLKSRTLAYDGRGNFVVKNKEMIPEALEVLKDRPLYAEKWAPFTKELAVMIVRSVNGLVFSYPIVETIHKDNICDLCYAPARVPDSVQLKAKLLAENAIKSFPGCGIFGVEMFYLETGELLINEIAPRPHNSGHYTIDACVTSQFEAHLRSILDLPMPKNFTSFSTITTNAIMLNVLGDKHTKDKELETCERALATPGSSVYLYGKESRPNRKVGHINIIASSMAECEQRLNYITGRTDIPIKISVAQKLDLEAMVKPLVGIIMGSDSDLPVMSAACAVLKDFGVPFEVTIVSAHRTPHRMSAYAISASKRGIKTIIAGAGGAAHLPGMVAAMTPLPVIGVPVKGSCLDGVDSLHSIVQMPRGVPVATVAINNSTNAALLAVRLLGAYDSSYTTKMEQFLLKQEEEVLVKAQKLETVGYEAYLENK.

S37 is subject to Phosphoserine. Positions K110–L298 constitute an ATP-grasp domain. G138–A193 serves as a coordination point for ATP.

This sequence in the C-terminal section; belongs to the AIR carboxylase family. Class I subfamily.

It carries out the reaction 5-amino-1-(5-phospho-D-ribosyl)imidazole-4-carboxylate + H(+) = 5-amino-1-(5-phospho-beta-D-ribosyl)imidazole + CO2. The protein operates within purine metabolism; IMP biosynthesis via de novo pathway; 5-amino-1-(5-phospho-D-ribosyl)imidazole-4-carboxylate from 5-amino-1-(5-phospho-D-ribosyl)imidazole (carboxylase route): step 1/1. In Saccharomyces cerevisiae (strain ATCC 204508 / S288c) (Baker's yeast), this protein is Phosphoribosylaminoimidazole carboxylase (ADE2).